Here is a 525-residue protein sequence, read N- to C-terminus: Keratin, type II cytoskeletal 71 (525 aa).

Residues 1–131 form a head region; that stretch reads MSRQFTCKSG…DPEIQKVRAQ (131 aa). The coil 1A stretch occupies residues 132–167; the sequence is EREQIKALNNKFASFIDKVRFLEQQNQVLETKWELL. Positions 132–445 constitute an IF rod domain; sequence EREQIKALNN…KLLESEECRM (314 aa). Residues 168 to 186 are linker 1; the sequence is QQLDLNNCKNNLEPILEGY. The tract at residues 187 to 278 is coil 1B; the sequence is ISNLRKQLET…CLYEAEIAQI (92 aa). Positions 279–302 are linker 12; sequence QSHISDMSVILSMDNNRDLNLDSI. The segment at 303–441 is coil 2; that stretch reads IDEVRAQYED…ATYRKLLESE (139 aa). Residues 442–525 form a tail region; that stretch reads ECRMSGEFPS…LSAPSKKASR (84 aa). Residues 492–525 are disordered; the sequence is VRGGESRSRSSTTDYKDALGKGSSLSAPSKKASR. A compositionally biased stretch (basic and acidic residues) spans 495 to 510; it reads GESRSRSSTTDYKDAL.

It belongs to the intermediate filament family. Heterodimer of a type I and a type II keratin. Associates with KRT16 and/or KRT17.

It is found in the cytoplasm. The protein localises to the cytoskeleton. In terms of biological role, plays a central role in hair formation. Essential component of keratin intermediate filaments in the inner root sheath (IRS) of the hair follicle. This chain is Keratin, type II cytoskeletal 71 (KRT71), found in Bos taurus (Bovine).